The following is a 147-amino-acid chain: UPF0251 protein NT01CX_1491 (147 aa).

Belongs to the UPF0251 family.

The polypeptide is UPF0251 protein NT01CX_1491 (Clostridium novyi (strain NT)).